A 416-amino-acid chain; its full sequence is CinA-like protein (416 aa).

This sequence belongs to the CinA family.

This chain is CinA-like protein, found in Thermosynechococcus vestitus (strain NIES-2133 / IAM M-273 / BP-1).